We begin with the raw amino-acid sequence, 353 residues long: Methylthioribose-1-phosphate isomerase (353 aa).

Residues 51 to 53 (RGA), Arg-94, and Gln-199 each bind substrate. Asp-240 serves as the catalytic Proton donor. Substrate is bound at residue 250–251 (NK).

The protein belongs to the eIF-2B alpha/beta/delta subunits family. MtnA subfamily. In terms of assembly, homodimer.

The catalysed reaction is 5-(methylsulfanyl)-alpha-D-ribose 1-phosphate = 5-(methylsulfanyl)-D-ribulose 1-phosphate. The protein operates within amino-acid biosynthesis; L-methionine biosynthesis via salvage pathway; L-methionine from S-methyl-5-thio-alpha-D-ribose 1-phosphate: step 1/6. Functionally, catalyzes the interconversion of methylthioribose-1-phosphate (MTR-1-P) into methylthioribulose-1-phosphate (MTRu-1-P). This is Methylthioribose-1-phosphate isomerase from Bacillus pumilus (strain SAFR-032).